The chain runs to 509 residues: Protein disulfide-isomerase (509 aa).

The signal sequence occupies residues 1–19; the sequence is MLSRSLLCLALAWVARVGA. The Thioredoxin 1 domain maps to 20–136; sequence DAPEEEDNVL…IVNWLKKRTG (117 aa). Active-site nucleophile residues include cysteine 55 and cysteine 58. Residues cysteine 55 and cysteine 58 are joined by a disulfide bond. Lysine 202 is subject to N6-acetyllysine. 2 positions are modified to N6-succinyllysine: lysine 224 and lysine 273. A phosphoserine mark is found at serine 333 and serine 359. The region spanning 335 to 477 is the Thioredoxin 2 domain; the sequence is ELTAEKITEF…FKKFLESGGQ (143 aa). Catalysis depends on nucleophile residues cysteine 399 and cysteine 402. Cysteine 399 and cysteine 402 are oxidised to a cystine. Serine 429 carries the phosphoserine modification. The disordered stretch occupies residues 473-509; the sequence is ESGGQDGAGDDDDVDLEEALEPDMEEDDDQKAVKDEL. The segment covering 480–501 has biased composition (acidic residues); sequence AGDDDDVDLEEALEPDMEEDDD. The short motif at 506 to 509 is the Prevents secretion from ER element; the sequence is KDEL.

This sequence belongs to the protein disulfide isomerase family. In terms of assembly, heterodimer; heterodimerizes with the protein microsomal triglyceride transfer MTTP. Homodimer. Homodimer. Monomers and homotetramers may also occur. Interacts with P4HA2, forming a heterotetramer consisting of 2 alpha subunits (P4HA2) and 2 beta (P4HB), where P4HB plays the role of a structural subunit; this tetramer catalyzes the formation of 4-hydroxyproline in collagen. Also constitutes the structural subunit of the microsomal triacylglycerol transfer protein MTTP in mammalian cells. Stabilizes both enzymes and retain them in the ER without contributing to the catalytic activity. Binds UBQLN1. Interacts with ERO1B. Interacts with ILDR2. Interacts with ERN1/IRE1A (via N-terminus); the interaction is enhanced by phosphorylation of P4HB by FAM20C in response to endoplasmic reticulum stress and results in attenuation of ERN1 activity. Post-translationally, phosphorylation of Ser-359 by FAM20C is induced by endoplasmic reticulum stress and results in a functional switch from oxidoreductase to molecular chaperone. It also promotes interaction with ERN1.

It localises to the endoplasmic reticulum. The protein localises to the endoplasmic reticulum lumen. The protein resides in the melanosome. It is found in the cell membrane. It carries out the reaction Catalyzes the rearrangement of -S-S- bonds in proteins.. Its function is as follows. This multifunctional protein catalyzes the formation, breakage and rearrangement of disulfide bonds. At the cell surface, seems to act as a reductase that cleaves disulfide bonds of proteins attached to the cell. May therefore cause structural modifications of exofacial proteins. Inside the cell, seems to form/rearrange disulfide bonds of nascent proteins. At high concentrations and following phosphorylation by FAM20C, functions as a chaperone that inhibits aggregation of misfolded proteins. At low concentrations, facilitates aggregation (anti-chaperone activity). May be involved with other chaperones in the structural modification of the TG precursor in hormone biogenesis. Also acts as a structural subunit of various enzymes such as prolyl 4-hydroxylase and microsomal triacylglycerol transfer protein MTTP. Receptor for LGALS9; the interaction retains P4HB at the cell surface of Th2 T helper cells, increasing disulfide reductase activity at the plasma membrane, altering the plasma membrane redox state and enhancing cell migration. The polypeptide is Protein disulfide-isomerase (P4HB) (Cricetulus griseus (Chinese hamster)).